The sequence spans 595 residues: Beta-(1--&gt;2)glucan export ATP-binding/permease protein NdvA (595 aa).

A run of 5 helical transmembrane segments spans residues 21–41 (FLLICTANITLAIITIAEPIL), 56–76 (LVTLAVWMCFGISNIIAYVLV), 129–149 (IWLEFMRQHLSTFVALFVLVP), 158–178 (LSIVLMVLAILYILIARLVMQ), and 252–272 (ISIVCVLLLGAFFVIKGQLSV). In terms of domain architecture, ABC transmembrane type-1 spans 21-301 (FLLICTANIT…ISGFINLAVS (281 aa)). The ABC transporter domain maps to 335–569 (IQFHHVTYEF…DGHFYKLLKA (235 aa)). Position 368–375 (368–375 (GPTGAGKT)) interacts with ATP.

This sequence belongs to the ABC transporter superfamily. Beta-(1--&gt;2)glucan exporter (TC 3.A.1.108.1) family. Homodimer.

It localises to the cell inner membrane. The enzyme catalyses [(1-&gt;2)-beta-D-glucosyl](n)(in) + ATP + H2O = [(1-&gt;2)-beta-D-glucosyl](n)(out) + ADP + phosphate + H(+). Functionally, involved in beta-(1--&gt;2)glucan export. Transmembrane domains (TMD) form a pore in the inner membrane and the ATP-binding domain (NBD) is responsible for energy generation. The chain is Beta-(1--&gt;2)glucan export ATP-binding/permease protein NdvA from Bartonella bacilliformis (strain ATCC 35685 / KC583 / Herrer 020/F12,63).